A 286-amino-acid chain; its full sequence is Undecaprenyl-diphosphatase (286 aa).

Transmembrane regions (helical) follow at residues proline 50–phenylalanine 70, leucine 97–leucine 117, leucine 127–alanine 147, glycine 165–serine 185, alanine 200–leucine 220, glycine 230–isoleucine 250, and threonine 262–glycine 282.

The protein belongs to the UppP family.

The protein localises to the cell inner membrane. The catalysed reaction is di-trans,octa-cis-undecaprenyl diphosphate + H2O = di-trans,octa-cis-undecaprenyl phosphate + phosphate + H(+). In terms of biological role, catalyzes the dephosphorylation of undecaprenyl diphosphate (UPP). Confers resistance to bacitracin. The sequence is that of Undecaprenyl-diphosphatase from Synechococcus sp. (strain WH7803).